Consider the following 154-residue polypeptide: Fimbrial protein (154 aa).

A propeptide spans 1–6 (MNAQKG) (leader sequence). Phenylalanine 7 is modified (N-methylphenylalanine). The helical transmembrane segment at 7-29 (FTLIELMIVIAIIGILAAIALPA) threads the bilayer.

This sequence belongs to the N-Me-Phe pilin family. The pili are polar flexible filaments of about 5.4 nanometers diameter and 2.5 micrometers average length; they consist of only a single polypeptide chain arranged in a helical configuration of five subunits per turn in the assembled pilus.

The protein localises to the fimbrium. It localises to the membrane. This chain is Fimbrial protein (tfpA), found in Moraxella nonliquefaciens.